We begin with the raw amino-acid sequence, 434 residues long: Mitochondrial distribution and morphology protein 12 (434 aa).

In terms of domain architecture, SMP-LTD spans Met-1–Val-434. Over residues Tyr-70–Glu-83 the composition is skewed to acidic residues. 2 disordered regions span residues Tyr-70–Pro-141 and Thr-181–Arg-277. Residues Ser-86–Ser-97 are compositionally biased toward basic and acidic residues. Over residues Ser-215–Ser-237 the composition is skewed to polar residues.

The protein belongs to the MDM12 family. As to quaternary structure, component of the ER-mitochondria encounter structure (ERMES) or MDM complex, composed of MMM1, MDM10, MDM12 and MDM34. An MMM1 homodimer associates with one molecule of MDM12 on each side in a pairwise head-to-tail manner, and the SMP-LTD domains of MMM1 and MDM12 generate a continuous hydrophobic tunnel for phospholipid trafficking.

The protein localises to the mitochondrion outer membrane. Its subcellular location is the endoplasmic reticulum membrane. Component of the ERMES/MDM complex, which serves as a molecular tether to connect the endoplasmic reticulum (ER) and mitochondria. Components of this complex are involved in the control of mitochondrial shape and protein biogenesis, and function in nonvesicular lipid trafficking between the ER and mitochondria. MDM12 is required for the interaction of the ER-resident membrane protein MMM1 and the outer mitochondrial membrane-resident beta-barrel protein MDM10. The MDM12-MMM1 subcomplex functions in the major beta-barrel assembly pathway that is responsible for biogenesis of all mitochondrial outer membrane beta-barrel proteins, and acts in a late step after the SAM complex. The MDM10-MDM12-MMM1 subcomplex further acts in the TOM40-specific pathway after the action of the MDM12-MMM1 complex. Essential for establishing and maintaining the structure of mitochondria and maintenance of mtDNA nucleoids. This Ajellomyces dermatitidis (strain ER-3 / ATCC MYA-2586) (Blastomyces dermatitidis) protein is Mitochondrial distribution and morphology protein 12.